A 1045-amino-acid chain; its full sequence is Unconventional myosin-Ia (1045 aa).

The 687-residue stretch at 11-697 folds into the Myosin motor domain; it reads AAVGDLVMLD…TLFDLEKRRQ (687 aa). 104–111 is a binding site for ATP; sequence GESGAGKT. Residues 574–596 are actin-binding; it reads VATLMKNLYSKNPNYIRCIKPND. IQ domains follow at residues 701–727, 723–750, and 746–774; these read AELA…RKSQ, MRKS…KRSV, and MKRS…RSDA. The TH1 domain occupies 861–1044; it reads KALYAQSLQQ…RGSHKMEILV (184 aa).

This sequence belongs to the TRAFAC class myosin-kinesin ATPase superfamily. Myosin family. In terms of tissue distribution, intestine.

Could play an important role in morphogenesis and function of intestinal microvilli. This Gallus gallus (Chicken) protein is Unconventional myosin-Ia (MYO1A).